The following is a 455-amino-acid chain: MARPVVAIIGRPNVGKSTLVNRLCRSREAIVHDQPGVTRDRTYQDGYWGDREFKVVDTGGLVFDDDSEFLPEIREQAALALDEASVALVIVDGKQGLTAADESIAEFLRQQRCPTLLAVNKCESVEQGLAMAAEFWSLGLGEPYPISAIHGAGTAEVLDQVLTFLPPKDQEGDEEEPIQMSIIGRPNVGKSSLLNAICGEQRAIVSPIRGTTRDTIDTNIVRENRPWRLVDTAGIRRRRSVNYGPEYFGINRSFKAIERSDVCVLVIDALDGVTEQDQRLAGRIEEDGRACVVVVNKWDAVEKDSHTMSATEKELRAKLYFLDWAPMLFTSALTGQRVESIFALAALAVEQHRRRVTTSVVNEVLKEALSWRSPPTTRGGRQGKLYYGTQVASRPPSFTLFVNDPKLFGDTYRRYVERHIREGLGFDGTPLKLFWRGKQQRDAEKELARQQNRRG.

EngA-type G domains lie at 4-169 (PVVA…PPKD) and 178-353 (IQMS…EQHR). Residues 10 to 17 (GRPNVGKS), 57 to 61 (DTGGL), 120 to 123 (NKCE), 184 to 191 (GRPNVGKS), 231 to 235 (DTAGI), and 296 to 299 (NKWD) contribute to the GTP site. One can recognise a KH-like domain in the interval 354–439 (RRVTTSVVNE…PLKLFWRGKQ (86 aa)).

It belongs to the TRAFAC class TrmE-Era-EngA-EngB-Septin-like GTPase superfamily. EngA (Der) GTPase family. Associates with the 50S ribosomal subunit.

In terms of biological role, GTPase that plays an essential role in the late steps of ribosome biogenesis. In Synechococcus sp. (strain CC9902), this protein is GTPase Der.